A 1069-amino-acid polypeptide reads, in one-letter code: Structural polyprotein (1069 aa).

Residue Asp-28 participates in a divalent metal cation binding. The segment at 504–534 (THPKLVPPTEREPNSTPDGHKITGAKTKDNT) is disordered. Positions 512–534 (TEREPNSTPDGHKITGAKTKDNT) are enriched in basic and acidic residues. A Peptidase S50 domain is found at 558–791 (ADLPISLLQT…AFQGWFYCGA (234 aa)). The Nucleophile role is filled by Ser-692. Residue Lys-729 is part of the active site. Disordered regions lie at residues 876–900 (LPHE…STRM) and 1031–1069 (SGAA…TTLS).

Homotrimer. A central divalent metal stabilizes the VP2 trimer. As to quaternary structure, homodimer. Interacts (via C-terminus) with VP1 in the cytoplasm. Interacts with VP2. Specific enzymatic cleavages yield mature proteins. The capsid assembly seems to be regulated by polyprotein processing. The protease VP4 cleaves itself off the polyprotein, thus releasing pre-VP2 and VP3 within the infected cell. During capsid assembly, the C-terminus of pre-VP2 is further processed by VP4, giving rise to VP2, the external capsid protein and three small peptides that all stay closely associated with the capsid. In terms of processing, the N-termini of VP2 and VP3 are blocked.

Its subcellular location is the virion. It localises to the host cytoplasm. In terms of biological role, capsid protein VP2 self assembles to form an icosahedral capsid with a T=13 symmetry, about 70 nm in diameter, and consisting of 260 VP2 trimers. The capsid encapsulates the genomic dsRNA. VP2 is also involved in attachment and entry into the host cell. The precursor of VP2 plays an important role in capsid assembly. First, pre-VP2 and VP2 oligomers assemble to form a procapsid. Then, the pre-VP2 intermediates may be processed into VP2 proteins by proteolytic cleavage mediated by VP4 to obtain the mature virion. The final capsid is composed of pentamers and hexamers but VP2 has a natural tendency to assemble into all-pentameric structures. Therefore pre-VP2 may be required to allow formation of the hexameric structures. Its function is as follows. Protease VP4 is a serine protease that cleaves the polyprotein into its final products. Pre-VP2 is first partially cleaved, and may be completely processed by VP4 upon capsid maturation. Functionally, capsid protein VP3 plays a key role in virion assembly by providing a scaffold for the capsid made of VP2. May self-assemble to form a T=4-like icosahedral inner-capsid composed of at least 180 trimers. Plays a role in genomic RNA packaging by recruiting VP1 into the capsid and interacting with the dsRNA genome segments to form a ribonucleoprotein complex. Additionally, the interaction of the VP3 C-terminal tail with VP1 removes the inherent structural blockade of the polymerase active site. Thus, VP3 can also function as a transcriptional activator. In terms of biological role, structural peptide 1 is a small peptide derived from pre-VP2 C-terminus. It destabilizes and perforates cell membranes, suggesting a role during entry. Structural peptide 2 is a small peptide derived from pre-VP2 C-terminus. It is not essential for the virus viability, but viral growth is affected when missing. Its function is as follows. Structural peptide 3 is a small peptide derived from pre-VP2 C-terminus. It is not essential for the virus viability, but viral growth is affected when missing. Functionally, structural peptide 4 is a small peptide derived from pre-VP2 C-terminus. It is essential for the virus viability. This is Structural polyprotein from Channa lucius (Forest snakehead).